Here is a 304-residue protein sequence, read N- to C-terminus: HTH-type transcriptional activator CmpR (304 aa).

The region spanning 1 to 61 is the HTH lysR-type domain; sequence MKNATLHQFE…EQIGRKIYLT (61 aa). Positions 21–40 form a DNA-binding region, H-T-H motif; sequence FTKAAEELFLTQPTVSQQMK.

This sequence belongs to the LysR transcriptional regulatory family.

It is found in the cytoplasm. Functionally, activates transcription of the cmpABCD operon under carbon dioxide-limited conditions. Specifically binds to the cmpR-cmpA intergenic region. In Synechocystis sp. (strain ATCC 27184 / PCC 6803 / Kazusa), this protein is HTH-type transcriptional activator CmpR (cmpR).